Consider the following 637-residue polypeptide: CREB-regulated transcription coactivator 3 (637 aa).

Phosphoserine is present on S66. A compositionally biased stretch (basic residues) spans 105–115 (NRLHSSHHRPI). 2 disordered regions span residues 105 to 184 (NRLH…SLQD) and 269 to 288 (HFPS…YANI). A Phosphoserine modification is found at S133. A Phosphothreonine modification is found at T143. Position 145 is a phosphoserine; by SIK2 (S145). The segment covering 145–159 (SDSALHTSASSTKSQ) has biased composition (polar residues). T151 is modified (phosphothreonine). Residue S293 is modified to Phosphoserine. The tract at residues 299–462 (AMTHLGISGS…QNYQPPSPVP (164 aa)) is disordered. Residues 309-337 (PGMQNTRSNPSIQATMNNNSLASNVNSHT) are compositionally biased toward polar residues. The segment covering 344–365 (PALHPSLRLSSLSNPSLPTSAL) has biased composition (low complexity). Residues S377 and S396 each carry the phosphoserine modification. Over residues 377–395 (SPLTLTPGSESNRSISNQF) the composition is skewed to polar residues. The segment covering 396 to 407 (SPTSPMNMPPNS) has biased composition (low complexity). The segment covering 418–429 (SLPPLEPPPPYP) has biased composition (pro residues). The segment covering 430-447 (LYSDQPQPHLHHTQQQMH) has biased composition (low complexity). S561 is subject to Phosphoserine. The segment at 615–637 (MLSDPDMVLPDPSIEDSFRSDKL) is disordered.

The protein belongs to the TORC family. As to quaternary structure, binding, as a tetramer, through its N-terminal region, with the bZIP domain of creb1 enhances recruitment of taf4 to the promoter. 'Arg-300' in the bZIP domain of creb1 is essential for this interaction.

The protein localises to the nucleus. The protein resides in the cytoplasm. In terms of biological role, transcriptional coactivator for creb1 which activates transcription through both consensus and variant cAMP response element (CRE) sites. Acts as a coactivator, in the SIK/TORC signaling pathway, being active when dephosphorylated and acts independently of creb1 'Ser-119' phosphorylation. Enhances the interaction of creb1 with taf4. Regulates the expression of specific CREB-activated genes such as the steroidogenic gene, StAR. Potent coactivator of ppargc1a and inducer of mitochondrial biogenesis in muscle cells. The polypeptide is CREB-regulated transcription coactivator 3 (crtc3) (Xenopus tropicalis (Western clawed frog)).